A 431-amino-acid chain; its full sequence is Keratin, type I cytoskeletal 40 (431 aa).

The interval 1–89 is head; that stretch reads MASDCSPTGC…CEDGVFNSNE (89 aa). Residues 89 to 400 enclose the IF rod domain; it reads EKETMQFLND…GLLDSEDSRL (312 aa). Residues 90 to 124 form a coil 1A region; the sequence is KETMQFLNDRLASYLEKVRGLEELNAELECRIREQ. Positions 125–135 are linker 1; it reads CEEDVPLVCPD. The interval 136–236 is coil 1B; it reads YQCYFDTIED…HEEEVNVLRG (101 aa). The segment at 237–252 is linker 12; sequence QLGDRLSVELDTAPTT. The coil 2 stretch occupies residues 253-396; that stretch reads DLNRVLDEMR…NTYQGLLDSE (144 aa). The segment at 397 to 431 is tail; that stretch reads DSRLPCNPCSATSMSNDTCEPCSAYVICTVENSCP.

Belongs to the intermediate filament family. As to quaternary structure, heterotetramer of two type I and two type II keratins.

May play a role in late hair differentiation. This is Keratin, type I cytoskeletal 40 (KRT40) from Bos taurus (Bovine).